The following is a 217-amino-acid chain: Phosphoribosylformylglycinamidine synthase subunit PurQ (217 aa).

The Glutamine amidotransferase type-1 domain occupies 2 to 217; the sequence is SIGVLVFPGS…GRVLLQGLLS (216 aa). Cysteine 86 (nucleophile) is an active-site residue. Active-site residues include histidine 194 and glutamate 196.

As to quaternary structure, part of the FGAM synthase complex composed of 1 PurL, 1 PurQ and 2 PurS subunits.

The protein resides in the cytoplasm. The catalysed reaction is N(2)-formyl-N(1)-(5-phospho-beta-D-ribosyl)glycinamide + L-glutamine + ATP + H2O = 2-formamido-N(1)-(5-O-phospho-beta-D-ribosyl)acetamidine + L-glutamate + ADP + phosphate + H(+). It catalyses the reaction L-glutamine + H2O = L-glutamate + NH4(+). It functions in the pathway purine metabolism; IMP biosynthesis via de novo pathway; 5-amino-1-(5-phospho-D-ribosyl)imidazole from N(2)-formyl-N(1)-(5-phospho-D-ribosyl)glycinamide: step 1/2. In terms of biological role, part of the phosphoribosylformylglycinamidine synthase complex involved in the purines biosynthetic pathway. Catalyzes the ATP-dependent conversion of formylglycinamide ribonucleotide (FGAR) and glutamine to yield formylglycinamidine ribonucleotide (FGAM) and glutamate. The FGAM synthase complex is composed of three subunits. PurQ produces an ammonia molecule by converting glutamine to glutamate. PurL transfers the ammonia molecule to FGAR to form FGAM in an ATP-dependent manner. PurS interacts with PurQ and PurL and is thought to assist in the transfer of the ammonia molecule from PurQ to PurL. The protein is Phosphoribosylformylglycinamidine synthase subunit PurQ of Parasynechococcus marenigrum (strain WH8102).